Consider the following 299-residue polypeptide: Elongation factor Ts (299 aa).

The segment at 81–84 is involved in Mg(2+) ion dislocation from EF-Tu; sequence TDFV.

The protein belongs to the EF-Ts family.

It is found in the cytoplasm. Associates with the EF-Tu.GDP complex and induces the exchange of GDP to GTP. It remains bound to the aminoacyl-tRNA.EF-Tu.GTP complex up to the GTP hydrolysis stage on the ribosome. The protein is Elongation factor Ts of Halothermothrix orenii (strain H 168 / OCM 544 / DSM 9562).